The following is a 205-amino-acid chain: Large ribosomal subunit protein uL3 (205 aa).

Belongs to the universal ribosomal protein uL3 family. In terms of assembly, part of the 50S ribosomal subunit. Forms a cluster with proteins L14 and L19.

One of the primary rRNA binding proteins, it binds directly near the 3'-end of the 23S rRNA, where it nucleates assembly of the 50S subunit. This Bacteroides fragilis (strain ATCC 25285 / DSM 2151 / CCUG 4856 / JCM 11019 / LMG 10263 / NCTC 9343 / Onslow / VPI 2553 / EN-2) protein is Large ribosomal subunit protein uL3.